Reading from the N-terminus, the 362-residue chain is METRKIIHVDMDAFYASVEQRDFPEYKGKPLIVGGPPNSRSVVSAASYEARKFGVRSAMPCSKAAQLAPQAIFVFPRFEVYKEVSKQIREIFLEYTDLVEMLSLDEGYLDVTFNKKNIPYAVTIAKEIRTEIFKRTELTASAGVGNSKFISKLASEKNKPNGLTVVLPDDVISFIDPLPVSSFHGVGKVTARKMKELGIYTGKDLRTKSIDELVQHFGKMGIYYYKISRGEDERMVQSSRERKSLGAESTFDRDKLDYDDLLKQLKDVAVVVERRLEKKDFAGKTLTLKIKFYDFSLKTRSKTLSEPIFKADELYSTAIELFEEFFEIKYGKKSAIKAIRLLGISLSHPNSENEDPNLFLNL.

The region spanning 6 to 187 (IIHVDMDAFY…LPVSSFHGVG (182 aa)) is the UmuC domain. 2 residues coordinate Mg(2+): D10 and D105. The active site involves E106.

The protein belongs to the DNA polymerase type-Y family. As to quaternary structure, monomer. It depends on Mg(2+) as a cofactor.

It is found in the cytoplasm. It carries out the reaction DNA(n) + a 2'-deoxyribonucleoside 5'-triphosphate = DNA(n+1) + diphosphate. Functionally, poorly processive, error-prone DNA polymerase involved in untargeted mutagenesis. Copies undamaged DNA at stalled replication forks, which arise in vivo from mismatched or misaligned primer ends. These misaligned primers can be extended by PolIV. Exhibits no 3'-5' exonuclease (proofreading) activity. May be involved in translesional synthesis, in conjunction with the beta clamp from PolIII. The polypeptide is DNA polymerase IV (Leptospira interrogans serogroup Icterohaemorrhagiae serovar Lai (strain 56601)).